The sequence spans 358 residues: Leukotriene B4 receptor 2 (358 aa).

Topologically, residues 1–24 (MSVCYRPPGNETLLSWKGSRATGT) are extracellular. Residue N10 is glycosylated (N-linked (GlcNAc...) asparagine). A helical transmembrane segment spans residues 25-45 (AFLLLAALLGLPGNGFVVWSL). The Cytoplasmic portion of the chain corresponds to 46-60 (AGWRPTAGRPLAATL). The chain crosses the membrane as a helical span at residues 61–81 (VLHLALADGAVLLLTPLFVAF). Residues 82-96 (LSRQAWPLGQVGCKA) are Extracellular-facing. The helical transmembrane segment at 97-117 (VYYVCALSMYASVLLTGLLSL) threads the bilayer. Residues 118 to 140 (QRCLAVTRPFLAPRLRSPALARR) lie on the Cytoplasmic side of the membrane. Residues 141-161 (LLLGVWLAALVLAVPAAVYRH) traverse the membrane as a helical segment. Topologically, residues 162-185 (LWGDRVCQLCHPSAVHAAAHLSLE) are extracellular. A helical transmembrane segment spans residues 186–206 (TLTAFVLPFGTVLGCYGVTLA). At 207 to 225 (RLRGARWGSGRQGTRVGRL) the chain is on the cytoplasmic side. The chain crosses the membrane as a helical span at residues 226-246 (VSAIVLAFGLLWAPYHAVNLL). The Extracellular portion of the chain corresponds to 247 to 275 (QAVAALAPPEGPLARLGGAGQAARAGTTA). A helical transmembrane segment spans residues 276–296 (LAFFSSSVNPVLYVFTAGDLL). Topologically, residues 297–358 (PRAGPRFLTR…GRMEKDSQEW (62 aa)) are cytoplasmic. The segment at 315-358 (RVGSRSREGTMELRTTPRLKVVGQGRGYGDPGGGGRMEKDSQEW) is disordered. Residues 338–349 (QGRGYGDPGGGG) are compositionally biased toward gly residues.

This sequence belongs to the G-protein coupled receptor 1 family.

It localises to the cell membrane. In terms of biological role, low-affinity receptor for leukotrienes including leukotriene B4. Mediates chemotaxis of granulocytes and macrophages. The response is mediated via G-proteins that activate a phosphatidylinositol-calcium second messenger system. This is Leukotriene B4 receptor 2 (Ltb4r2) from Rattus norvegicus (Rat).